Here is a 306-residue protein sequence, read N- to C-terminus: MWFKNLLVYRLTQDVPFDAEALETALATKPARACASQEVATYGFVAPFGKGEDAPLVHISQDFMLIAARKEERILPGSVVRDALKEKVDEIEAEQMRKVYKKERDQLKDEIIQAFLPRAFIRRSATFAAIAPKQGLILVNASSPKRAEDLLSTLREVIGSLPVRPLTVKVSPSATMTDWVKTQKAADNFFVLDECELRDTHEDGGIVRCKRQDLTGDEIQLHLSTGKVVTQLSLAWQDKLSFVLDDKLVVKRLKFEDLLQDQAEQDGGDEALGQLDASFTLMMLTFGEFLPELFEALGGEEIPQGI.

It belongs to the RdgC family.

The protein localises to the cytoplasm. Its subcellular location is the nucleoid. Functionally, may be involved in recombination. This chain is Recombination-associated protein RdgC, found in Pseudomonas syringae pv. syringae (strain B728a).